Here is a 716-residue protein sequence, read N- to C-terminus: Putative mannosyltransferase YkcB (716 aa).

8 helical membrane-spanning segments follow: residues 8 to 28 (LDIV…YNIW), 44 to 64 (MMQS…FITV), 87 to 107 (SVIL…YLLI), 118 to 135 (IASF…VART), 137 to 157 (NVDA…FKAI), 159 to 179 (KGKL…FNTK), 180 to 200 (MLQA…AANA), and 206 to 226 (IVSL…WPLI). A disordered region spans residues 260-363 (TGQNSGGGQG…GSGMFGTGTP (104 aa)). Residues 278–289 (EMSSSDNTQAPP) show a composition bias toward polar residues. A compositionally biased stretch (low complexity) spans 290–307 (NQSSSNSSSSDGKSSNGN). The span at 318–347 (PSGGQGGPPSGGDGGQGGPGGDGGKGGTGT) shows a compositional bias: gly residues. Transmembrane regions (helical) follow at residues 376-396 (QISW…IAGA), 409-429 (TVFW…AEFF), 433-453 (YLIM…VALV), 462-482 (WKAW…LFIL), 491-511 (VGWS…LLLF), and 518-538 (FSYY…MYWA). The tract at residues 664–716 (VASEKWQSSSDQKTENTDSADTSSSKASGENGKMGGPGGMNQSATLYELHADE) is disordered. Residues 680-694 (TDSADTSSSKASGEN) show a composition bias toward low complexity.

It belongs to the glycosyltransferase 39 family.

The protein resides in the cell membrane. This is Putative mannosyltransferase YkcB (ykcB) from Bacillus subtilis (strain 168).